The chain runs to 411 residues: Meiotic driver wtf33 (411 aa).

The interval Met1–Asn95 is disordered. The span at Ser11–Pro29 shows a compositional bias: basic and acidic residues. A compositionally biased stretch (polar residues) spans Gly57–Pro72. 6 helical membrane passes run Ala104–Tyr124, Trp137–Phe157, Glu244–Val264, Thr281–Trp301, Ala303–Gly323, and Gly336–Met356.

This sequence belongs to the WTF family. Homomer. Forms protein aggregates. The two isoforms can interact with each other and with themselves. High sequence similarity is required for their interaction.

The protein localises to the spore membrane. Its subcellular location is the vacuole membrane. It is found in the ascus epiplasm. It localises to the cytoplasm. The protein resides in the endoplasmic reticulum membrane. Promotes unequal transmission of alleles from the parental zygote to progeny spores by acting as poison/antidote system where the poison and antidote proteins are produced from the same locus; the poison component is trans-acting and targets all spores within an ascus whereas the antidote component is spore-specific, leading to poisoning of all progeny that do not inherit the allele. Its function is as follows. Localizes isoform 2 to the vacuole thereby facilitating its degradation. In terms of biological role, forms toxic aggregates that disrupt spore maturation. In Schizosaccharomyces kambucha (Fission yeast), this protein is Meiotic driver wtf33.